The sequence spans 347 residues: Protein RecA (347 aa).

67–74 (GPESSGKT) provides a ligand contact to ATP.

The protein belongs to the RecA family.

The protein resides in the cytoplasm. Its function is as follows. Can catalyze the hydrolysis of ATP in the presence of single-stranded DNA, the ATP-dependent uptake of single-stranded DNA by duplex DNA, and the ATP-dependent hybridization of homologous single-stranded DNAs. It interacts with LexA causing its activation and leading to its autocatalytic cleavage. In Paenarthrobacter aurescens (strain TC1), this protein is Protein RecA.